Here is a 162-residue protein sequence, read N- to C-terminus: Phosphopantetheine adenylyltransferase (162 aa).

Serine 11 lines the substrate pocket. Residues 11 to 12 and histidine 19 contribute to the ATP site; that span reads SF. The substrate site is built by lysine 43, valine 76, and arginine 90. Residues 91–93, glutamate 101, and 126–132 each bind ATP; these read GLR and HLYISSS.

It belongs to the bacterial CoaD family. In terms of assembly, homohexamer. Requires Mg(2+) as cofactor.

It localises to the cytoplasm. The enzyme catalyses (R)-4'-phosphopantetheine + ATP + H(+) = 3'-dephospho-CoA + diphosphate. Its pathway is cofactor biosynthesis; coenzyme A biosynthesis; CoA from (R)-pantothenate: step 4/5. Its function is as follows. Reversibly transfers an adenylyl group from ATP to 4'-phosphopantetheine, yielding dephospho-CoA (dPCoA) and pyrophosphate. The sequence is that of Phosphopantetheine adenylyltransferase from Streptococcus pneumoniae (strain JJA).